The primary structure comprises 507 residues: NAD(P)H-quinone oxidoreductase chain 4, chloroplastic (507 aa).

15 consecutive transmembrane segments (helical) span residues 4–24 (FPWL…IFLL), 37–57 (LCIC…HFQL), 87–107 (IGPI…AWPV), 111–131 (AQLF…SFSS), 134–154 (LLLF…LLSM), 167–187 (FILY…GIGL), 208–228 (ALEV…LPII), 242–262 (HYST…YGLV), 272–292 (AHCL…IYAA), 305–325 (IAYS…SLSD), 330–350 (GAIL…FLAG), 386–406 (LALP…GIIT), 416–436 (ILIA…SLSM), 462–482 (LFVS…PDFV), and 483–503 (LSLS…SIVF).

This sequence belongs to the complex I subunit 4 family.

It is found in the plastid. The protein localises to the chloroplast thylakoid membrane. The enzyme catalyses a plastoquinone + NADH + (n+1) H(+)(in) = a plastoquinol + NAD(+) + n H(+)(out). The catalysed reaction is a plastoquinone + NADPH + (n+1) H(+)(in) = a plastoquinol + NADP(+) + n H(+)(out). This is NAD(P)H-quinone oxidoreductase chain 4, chloroplastic (ndhD) from Oenothera elata subsp. hookeri (Hooker's evening primrose).